Reading from the N-terminus, the 705-residue chain is 1,4-alpha-glucan branching enzyme GlgB (705 aa).

Asp309 acts as the Nucleophile in catalysis. Residue Glu360 is the Proton donor of the active site. The disordered stretch occupies residues 654–705 (VQVERAADPRPNEQQRLVAETPAHEGGRSAPADAAESAEQKPDDEQKGGKKA). The span at 691–705 (AEQKPDDEQKGGKKA) shows a compositional bias: basic and acidic residues.

Belongs to the glycosyl hydrolase 13 family. GlgB subfamily. In terms of assembly, monomer.

The enzyme catalyses Transfers a segment of a (1-&gt;4)-alpha-D-glucan chain to a primary hydroxy group in a similar glucan chain.. Its pathway is glycan biosynthesis; glycogen biosynthesis. Functionally, catalyzes the formation of the alpha-1,6-glucosidic linkages in glycogen by scission of a 1,4-alpha-linked oligosaccharide from growing alpha-1,4-glucan chains and the subsequent attachment of the oligosaccharide to the alpha-1,6 position. The chain is 1,4-alpha-glucan branching enzyme GlgB from Deinococcus radiodurans (strain ATCC 13939 / DSM 20539 / JCM 16871 / CCUG 27074 / LMG 4051 / NBRC 15346 / NCIMB 9279 / VKM B-1422 / R1).